Reading from the N-terminus, the 443-residue chain is Phosphoglucosamine mutase (443 aa).

Ser-101 functions as the Phosphoserine intermediate in the catalytic mechanism. Residues Ser-101, Asp-240, Asp-242, and Asp-244 each contribute to the Mg(2+) site. Ser-101 is modified (phosphoserine).

This sequence belongs to the phosphohexose mutase family. Mg(2+) is required as a cofactor. In terms of processing, activated by phosphorylation.

It catalyses the reaction alpha-D-glucosamine 1-phosphate = D-glucosamine 6-phosphate. Catalyzes the conversion of glucosamine-6-phosphate to glucosamine-1-phosphate. In Psychromonas ingrahamii (strain DSM 17664 / CCUG 51855 / 37), this protein is Phosphoglucosamine mutase.